Reading from the N-terminus, the 455-residue chain is Venom prothrombin activator trocarin-D (455 aa).

A signal peptide spans methionine 1–alanine 20. Residues glutamate 21–arginine 40 constitute a propeptide that is removed on maturation. In terms of domain architecture, Gla spans serine 41–aspartate 86. 11 positions are modified to 4-carboxyglutamate: glutamate 46, glutamate 47, glutamate 54, glutamate 56, glutamate 59, glutamate 60, glutamate 65, glutamate 66, glutamate 69, glutamate 72, and glutamate 75. Cysteine 57 and cysteine 62 are joined by a disulfide. Residues aspartate 86–glutamate 122 enclose the EGF-like 1; calcium-binding domain. 11 disulfide bridges follow: cysteine 90/cysteine 101, cysteine 95/cysteine 110, cysteine 112/cysteine 121, cysteine 129/cysteine 140, cysteine 136/cysteine 149, cysteine 151/cysteine 164, cysteine 172/cysteine 328, cysteine 216/cysteine 221, cysteine 236/cysteine 252, cysteine 376/cysteine 390, and cysteine 401/cysteine 429. O-linked (Hex...) serine glycosylation occurs at serine 92. The EGF-like 2 domain occupies cysteine 129–cysteine 164. Positions arginine 182–arginine 209 are cleaved as a propeptide — activation peptide. Positions isoleucine 210–serine 453 constitute a Peptidase S1 domain. The active-site Charge relay system is the histidine 251. N-linked (GlcNAc...) asparagine glycosylation occurs at asparagine 254. The active-site Charge relay system is aspartate 308. Serine 405 functions as the Charge relay system in the catalytic mechanism.

The protein belongs to the peptidase S1 family. Snake venom subfamily. In terms of assembly, heterodimer of a light chain and a heavy chain; disulfide-linked. Post-translationally, gamma-carboxyglutamate residues are formed by vitamin K dependent carboxylation. These residues are essential for the binding of calcium. In terms of processing, the O-linked saccharides at Ser-92 are a mixture of Xyl-Glc, and Glc along with smaller amounts of Xyl-GlcNAc, GlcNAc, Gal, GalNAc, Xyl-Gal, and Xyl-GalNAc, suggesting that the glycosyl transferases responsible for this modification are non-specific. The N-linked carbohydrate at Asn-254 (Asn-45 of the heavy chain) is a sialylated and diantennary oligosaccharide. In terms of tissue distribution, expressed by the venom gland.

Its subcellular location is the secreted. It catalyses the reaction Selective cleavage of Arg-|-Thr and then Arg-|-Ile bonds in prothrombin to form thrombin.. Its activity is regulated as follows. Activated by calcium and phospholipids. Functionally, snake prothrombin activator that attacks the hemostatic system of prey. This protein is functionally similar to blood coagulation factor Xa. Induces cyanosis and death in mice at 1 mg/kg body weight during blood clotting. The sequence is that of Venom prothrombin activator trocarin-D from Tropidechis carinatus (Australian rough-scaled snake).